Reading from the N-terminus, the 132-residue chain is Cytochrome B5 isoform C (132 aa).

The Cytochrome b5 heme-binding domain maps to 2–78; it reads ANLISFHDVA…MKKYCIGDVD (77 aa). Heme-binding residues include His-37 and His-61. A helical membrane pass occupies residues 110 to 129; it reads LLIYLIPLLILGVAFALRFY.

Belongs to the cytochrome b5 family. As to quaternary structure, interacts with CER1, BI-1, FAH1 and FAH2.

The protein localises to the endoplasmic reticulum membrane. Functionally, membrane bound hemoprotein which function as an electron carrier for several membrane bound oxygenases, including fatty acid desaturases. This is Cytochrome B5 isoform C from Arabidopsis thaliana (Mouse-ear cress).